The primary structure comprises 181 residues: Cytochrome c-type biogenesis protein CcmE (181 aa).

Topologically, residues 1-8 are cytoplasmic; sequence MNPRRKSR. Residues 9–29 form a helical; Signal-anchor for type II membrane protein membrane-spanning segment; the sequence is LKVVVSIIFGVAVAAGLTLYA. Residues 30–181 are Periplasmic-facing; that stretch reads LSQNIDLFYT…TLKTLQGEAN (152 aa). The heme site is built by histidine 131 and tyrosine 135. 2 stretches are compositionally biased toward basic and acidic residues: residues 135-148 and 156-166; these read YMPP…KEQH and ADLKGTSARDK. The tract at residues 135–166 is disordered; sequence YMPPELGDKLKEQHGAAGISEADLKGTSARDK.

This sequence belongs to the CcmE/CycJ family.

It localises to the cell inner membrane. Heme chaperone required for the biogenesis of c-type cytochromes. Transiently binds heme delivered by CcmC and transfers the heme to apo-cytochromes in a process facilitated by CcmF and CcmH. This Actinobacillus pleuropneumoniae serotype 7 (strain AP76) protein is Cytochrome c-type biogenesis protein CcmE.